The chain runs to 334 residues: MAPSPIMPRYHVGPMASTRRAISKKGFPRTRSFPVLTAPLDYLRDSPGKDIRSGLTDAFNEFLCVPEDKVVTIKRIIDLLHNASLLIDDIQDDSKLRRGVPVAHSIFGIAQTINSANLAYFLAQQELKKLSNPDAFAIYTDELINLHRGQGMELHWRESLHCPTEEEYMRMVQNKTGGLFRLAIRLLQGESRSDRDYVPLVDTLGTLFQIRDDYQNLQSDVYSKNKGFCEDISEGKFSYPVIHSIRARPGDLRLLNILKQRSEDLMVKQYAVSYINSTGSFEFCRGKIDCLAQWANLQLAALEEAEGAGRGDKLRAVLRLLDMKASGKQADVAS.

Isopentenyl diphosphate is bound by residues lysine 49, arginine 52, and histidine 81. Mg(2+)-binding residues include aspartate 88 and aspartate 92. Arginine 97 provides a ligand contact to dimethylallyl diphosphate. An isopentenyl diphosphate-binding site is contributed by arginine 98. 3 residues coordinate dimethylallyl diphosphate: lysine 175, threonine 176, and glutamine 209. Aspartate 212 contacts Mg(2+). Residues asparagine 216, lysine 226, and lysine 236 each coordinate dimethylallyl diphosphate.

Belongs to the FPP/GGPP synthase family. It depends on Mg(2+) as a cofactor.

It carries out the reaction isopentenyl diphosphate + dimethylallyl diphosphate = (2E)-geranyl diphosphate + diphosphate. The catalysed reaction is isopentenyl diphosphate + (2E)-geranyl diphosphate = (2E,6E)-farnesyl diphosphate + diphosphate. It catalyses the reaction isopentenyl diphosphate + (2E,6E)-farnesyl diphosphate = (2E,6E,10E)-geranylgeranyl diphosphate + diphosphate. Its pathway is secondary metabolite biosynthesis. Functionally, geranylgeranyl pyrophosphate synthase; part of the gene cluster that mediates the biosynthesis of paspalitrems, indole-diterpene (IDT) mycotoxins that are potent tremorgens in mammals. The geranylgeranyl diphosphate (GGPP) synthase idtG is proposed to catalyze the first step in IDT biosynthesis via catalysis of a series of iterative condensations of isopentenyl diphosphate (IPP) with dimethylallyl diphosphate (DMAPP), geranyl diphosphate (GPP), and farnesyl diphosphate (FPP), to form GGPP. Condensation of indole-3-glycerol phosphate with GGPP by the prenyltransferase idtC then forms 3-geranylgeranylindole (3-GGI). Epoxidation of the two terminal alkenes of the geranylgeranyl moiety by the FAD-dependent monooxygenase idtM, and cyclization by the terpene cyclase idtB then leads to the production of paspaline. The cytochrome P450 monooxygenase idtP then catalyzes oxidative elimination of the pendant methyl group at C-12 of paspaline and generates the C-10 ketone to yield 13-desoxypaxilline. The cytochrome P450 monooxygenase idtQ may catalyze the C-13 oxidation of 13-desoxypaxilline to afford paxilline. Considering that both paspalicine and paxilline were detected in C.paspali, idtQ also catalyzes the formation of paspalinine from 13-desoxypaxilline via paspalicine as an intermediate. Finally, the alpha-prenyltransferase idtF prenylates paspalinine at the C-20 or the C-21 positions to yield paspalitrems A and C, respectively. The hydroxylation of paspalitrem A at C-32 by a still unknown oxidase affords paspalitrem B. This chain is Geranylgeranyl pyrophosphate synthase idtG, found in Claviceps paspali (Rye ergot fungus).